An 89-amino-acid chain; its full sequence is Elongation factor 1-beta (89 aa).

It belongs to the EF-1-beta/EF-1-delta family.

Promotes the exchange of GDP for GTP in EF-1-alpha/GDP, thus allowing the regeneration of EF-1-alpha/GTP that could then be used to form the ternary complex EF-1-alpha/GTP/AAtRNA. The polypeptide is Elongation factor 1-beta (ef1b) (Methanothermobacter thermautotrophicus (strain ATCC 29096 / DSM 1053 / JCM 10044 / NBRC 100330 / Delta H) (Methanobacterium thermoautotrophicum)).